A 64-amino-acid polypeptide reads, in one-letter code: Alpha-mammal toxin Lqh2 (64 aa).

The 63-residue stretch at 2 to 64 (KDGYIVDDVN…VRTKGPGRCR (63 aa)) folds into the LCN-type CS-alpha/beta domain. Intrachain disulfides connect cysteine 12–cysteine 63, cysteine 16–cysteine 36, cysteine 22–cysteine 46, and cysteine 26–cysteine 48. Arginine 64 bears the Arginine amide mark.

This sequence belongs to the long (4 C-C) scorpion toxin superfamily. Sodium channel inhibitor family. Alpha subfamily. Expressed by the venom gland.

The protein localises to the secreted. Alpha toxins bind voltage-independently at site-3 of sodium channels (Nav) and inhibit the inactivation of the activated channels, thereby blocking neuronal transmission. The dissociation is voltage-dependent. Is active on mammals and competes for alpha-toxins binding on both mammalian and cockroach sodium channels. The chain is Alpha-mammal toxin Lqh2 from Leiurus hebraeus (Hebrew deathstalker scorpion).